The sequence spans 87 residues: UPF0213 protein SSA_0709 (87 aa).

Residues N3–A78 enclose the GIY-YIG domain.

Belongs to the UPF0213 family.

This chain is UPF0213 protein SSA_0709, found in Streptococcus sanguinis (strain SK36).